A 356-amino-acid polypeptide reads, in one-letter code: Pyrimidine monooxygenase RutA (356 aa).

FMN contacts are provided by residues 49–50, asparagine 115, glutamate 124, 140–141, and serine 190; these read IK and RY.

This sequence belongs to the NtaA/SnaA/DszA monooxygenase family. RutA subfamily.

The enzyme catalyses uracil + FMNH2 + NADH + O2 = (Z)-3-ureidoacrylate + FMN + NAD(+) + H2O + H(+). It catalyses the reaction thymine + FMNH2 + NADH + O2 = (Z)-2-methylureidoacrylate + FMN + NAD(+) + H2O + H(+). In terms of biological role, catalyzes the pyrimidine ring opening between N-3 and C-4 by an unusual flavin hydroperoxide-catalyzed mechanism, adding oxygen atoms in the process to yield ureidoacrylate peracid, that immediately reacts with FMN forming ureidoacrylate and FMN-N(5)-oxide. The FMN-N(5)-oxide reacts spontaneously with NADH to produce FMN. Requires the flavin reductase RutF to regenerate FMN in vivo. The sequence is that of Pyrimidine monooxygenase RutA from Haliangium ochraceum (strain DSM 14365 / JCM 11303 / SMP-2).